A 388-amino-acid polypeptide reads, in one-letter code: MNLHEYQAKQLFAQYGLPTPEGYACSTPCQAEEAASKIGSGPWVVKCQVHAGGRGKAGGVKCVESKEAIHAFAEQWLGKRLVTYQTDAHGQPVRQILVEGATEIARELYLGAVIDRSSRRVVFMASTEGGVEIEQVAQKTPHLIHRVALDPLTGPQPYQGRELAFKLGLSGKQAQQFGQIFLGLATLFLQCDLTMAEINPLVITPQGDLLCLDGKLDVDSNALFRQPTLLEMEDPAQNDAREAHAAQWELNYVALEGNIGCMVNGAGLAMGTMDIVKLHGGAPANFLDVGGGATKERVTEAFKIILSDEHVRAVLVNIFGGIVRCDLIADGIIGAVAEVGVHVPVVVRLEGNNAELGTRILADSGLNIIAATSLTDAARQVVSAVEGK.

Residues 9–244 (KQLFAQYGLP…PAQNDAREAH (236 aa)) enclose the ATP-grasp domain. Residues K46, 53-55 (GRG), E99, T102, and E107 each bind ATP. Mg(2+) is bound by residues N199 and D213. Residues N264 and 321-323 (GIV) each bind substrate.

This sequence belongs to the succinate/malate CoA ligase beta subunit family. Heterotetramer of two alpha and two beta subunits. Requires Mg(2+) as cofactor.

The catalysed reaction is succinate + ATP + CoA = succinyl-CoA + ADP + phosphate. It carries out the reaction GTP + succinate + CoA = succinyl-CoA + GDP + phosphate. Its pathway is carbohydrate metabolism; tricarboxylic acid cycle; succinate from succinyl-CoA (ligase route): step 1/1. Succinyl-CoA synthetase functions in the citric acid cycle (TCA), coupling the hydrolysis of succinyl-CoA to the synthesis of either ATP or GTP and thus represents the only step of substrate-level phosphorylation in the TCA. The beta subunit provides nucleotide specificity of the enzyme and binds the substrate succinate, while the binding sites for coenzyme A and phosphate are found in the alpha subunit. The sequence is that of Succinate--CoA ligase [ADP-forming] subunit beta from Edwardsiella ictaluri (strain 93-146).